Here is a 586-residue protein sequence, read N- to C-terminus: Potassium-transporting ATPase potassium-binding subunit (586 aa).

12 helical membrane-spanning segments follow: residues 11 to 31 (LFLV…AKVF), 67 to 87 (AVAV…ILML), 136 to 156 (GLAV…IAVI), 179 to 199 (LYVL…QGVI), 279 to 299 (VEIF…GVMV), 306 to 326 (WAIL…LQGV), 351 to 371 (FGLA…CGAV), 381 to 401 (LGGM…GGVG), 403 to 423 (GLYT…LMIG), 442 to 462 (IITV…AMIT), 507 to 527 (ILGS…VLAM), and 551 to 571 (FALW…FPAL).

The protein belongs to the KdpA family. The system is composed of three essential subunits: KdpA, KdpB and KdpC.

It localises to the cell inner membrane. Functionally, part of the high-affinity ATP-driven potassium transport (or Kdp) system, which catalyzes the hydrolysis of ATP coupled with the electrogenic transport of potassium into the cytoplasm. This subunit binds the periplasmic potassium ions and delivers the ions to the membrane domain of KdpB through an intramembrane tunnel. In Geobacter metallireducens (strain ATCC 53774 / DSM 7210 / GS-15), this protein is Potassium-transporting ATPase potassium-binding subunit.